The chain runs to 186 residues: Elongation factor P (186 aa).

The protein belongs to the elongation factor P family.

The protein resides in the cytoplasm. It participates in protein biosynthesis; polypeptide chain elongation. Functionally, involved in peptide bond synthesis. Stimulates efficient translation and peptide-bond synthesis on native or reconstituted 70S ribosomes in vitro. Probably functions indirectly by altering the affinity of the ribosome for aminoacyl-tRNA, thus increasing their reactivity as acceptors for peptidyl transferase. The protein is Elongation factor P of Shewanella sp. (strain W3-18-1).